A 297-amino-acid chain; its full sequence is Homoserine kinase (297 aa).

79 to 89 (PIARGLGSSGA) contacts ATP.

This sequence belongs to the GHMP kinase family. Homoserine kinase subfamily.

It localises to the cytoplasm. It carries out the reaction L-homoserine + ATP = O-phospho-L-homoserine + ADP + H(+). The protein operates within amino-acid biosynthesis; L-threonine biosynthesis; L-threonine from L-aspartate: step 4/5. Functionally, catalyzes the ATP-dependent phosphorylation of L-homoserine to L-homoserine phosphate. This is Homoserine kinase from Pyrobaculum aerophilum (strain ATCC 51768 / DSM 7523 / JCM 9630 / CIP 104966 / NBRC 100827 / IM2).